Here is a 172-residue protein sequence, read N- to C-terminus: Ribosome maturation factor RimP (172 aa).

The protein belongs to the RimP family.

It localises to the cytoplasm. Functionally, required for maturation of 30S ribosomal subunits. This chain is Ribosome maturation factor RimP, found in Nitratidesulfovibrio vulgaris (strain ATCC 29579 / DSM 644 / CCUG 34227 / NCIMB 8303 / VKM B-1760 / Hildenborough) (Desulfovibrio vulgaris).